We begin with the raw amino-acid sequence, 648 residues long: cAMP-dependent protein kinase catalytic subunit (648 aa).

Low complexity-rich tracts occupy residues 1–20 (MSNS…TINN), 46–67 (SGNN…NSSG), 136–175 (QQQP…PQQQ), and 232–254 (NTPS…NPHT). Disordered regions lie at residues 1-25 (MSNS…KVNV), 40-86 (GGGG…TKMD), 121-175 (KVPS…PQQQ), and 219-290 (QQQQ…DTNP). The segment covering 255–290 (SGLSLQHAHSSYTPSNVLHSPTHFQSSLPTRLDTNP) has biased composition (polar residues). The region spanning 336-590 (FKQIRVIGTG…ALDVKNHRWF (255 aa)) is the Protein kinase domain. ATP contacts are provided by residues 342–350 (IGTGTFGKV) and Lys-365. The active-site Proton acceptor is Asp-459. A Phosphothreonine modification is found at Thr-490. Residues 591–648 (SDINWERLYQRRDNGPFIPKIQHQGDSSNFEMYDEEEMVEEPPSSNYVDPYAHLFKDF) enclose the AGC-kinase C-terminal domain.

The protein belongs to the protein kinase superfamily. AGC Ser/Thr protein kinase family. cAMP subfamily. As to quaternary structure, in Dictyostelium the holoenzyme is a dimer composed of a regulatory (R) and a catalytic (C) subunit. In the presence of cAMP it dissociates into the active C subunit and an R monomer.

The enzyme catalyses L-seryl-[protein] + ATP = O-phospho-L-seryl-[protein] + ADP + H(+). It carries out the reaction L-threonyl-[protein] + ATP = O-phospho-L-threonyl-[protein] + ADP + H(+). Functionally, essential for differentiation and fruit morphogenesis. The protein is cAMP-dependent protein kinase catalytic subunit (pkaC) of Dictyostelium discoideum (Social amoeba).